Consider the following 210-residue polypeptide: Large ribosomal subunit protein uL3 (210 aa).

The protein belongs to the universal ribosomal protein uL3 family. Part of the 50S ribosomal subunit. Forms a cluster with proteins L14 and L19.

Functionally, one of the primary rRNA binding proteins, it binds directly near the 3'-end of the 23S rRNA, where it nucleates assembly of the 50S subunit. The chain is Large ribosomal subunit protein uL3 from Lawsonia intracellularis (strain PHE/MN1-00).